We begin with the raw amino-acid sequence, 414 residues long: Isocitrate dehydrogenase [NADP] cytoplasmic (414 aa).

At S2 the chain carries N-acetylserine. Y42 is modified (phosphotyrosine). NADP(+) is bound at residue 75–77 (TIT). T77 contributes to the substrate binding site. K81 bears the N6-acetyllysine mark. An NADP(+)-binding site is contributed by R82. Residues 94–100 (SPNGTIR) and R109 each bind substrate. K126 is modified (N6-succinyllysine). Substrate-binding residues include R132 and K212. K224, K233, and K243 each carry N6-acetyllysine. A Mn(2+)-binding site is contributed by D252. K260 lines the NADP(+) pocket. 2 residues coordinate Mn(2+): D275 and D279. 310-315 (GTVTRH) lines the NADP(+) pocket. Residue K321 is modified to N6-acetyllysine. N328 is an NADP(+) binding site. S389 is subject to Phosphoserine. N6-succinyllysine is present on K400.

Belongs to the isocitrate and isopropylmalate dehydrogenases family. Homodimer. Mg(2+) is required as a cofactor. Mn(2+) serves as cofactor. Post-translationally, acetylation at Lys-374 dramatically reduces catalytic activity.

The protein resides in the cytoplasm. It is found in the cytosol. Its subcellular location is the peroxisome. It carries out the reaction D-threo-isocitrate + NADP(+) = 2-oxoglutarate + CO2 + NADPH. Its function is as follows. Catalyzes the NADP(+)-dependent oxidative decarboxylation of isocitrate (D-threo-isocitrate) to 2-ketoglutarate (2-oxoglutarate), which is required by other enzymes such as the phytanoyl-CoA dioxygenase. Plays a critical role in the generation of NADPH, an important cofactor in many biosynthesis pathways. May act as a corneal epithelial crystallin and may be involved in maintaining corneal epithelial transparency. This is Isocitrate dehydrogenase [NADP] cytoplasmic (IDH1) from Homo sapiens (Human).